The primary structure comprises 745 residues: MIINKPSRVRPDGRGKVTGELKYMTDLSFPGMLYGKVLRSAYPHAEIVSVCTIKAEKMEGVQAVVTHKDVPGLNRFGIVIPDQPVLCEDRVRYVGDAIAAVAAETEEIAEAALELIQVEYKELEVMDSPEKALRPNAQRLHEDGNILHRAFFSNGDVEEGFQASDTVFEETYELPRQMHTYMETEGGVAVPEDDGGFTMYAGTQHGYKDRFQLARIFDIPEEKIRIVSSPMGGSFGGKDELNIQPYAALLALKSGRPVKIHQTRKESVRSGIKRHPMKITIKTGADHSGNLLAHDVKIVADTGAYATLGPAVLDFSVEHAAGPYRIPNIRTEGISVFTNNGVAGEFRGFGGNQITFALETHLDRLSGMLGIDPLELRRKNIRKPHDLGPLEHRIAPTDGAAQVLNAISKSPILKKTSRNCGYLQRGTGAAITMHGGGLGFGRMDAAGGRLSLSSEGKITASFGFEECGQGILAAIEQIVMEELGCAAEDISIVIGDTAKVPKSGSSTASRGTSMVWHAIQRLKKPFLAQLKKRAAEWSGCSAENLIPGAAGLRDKNTKALVVTYKELAEKGPLAEETAFDFPTTPDPVVGGHFLYSFGAAAVEVEVDLLTGDVKLIDCEHAIAAGPVVSPQGYRGQIEGGAAMALGYTLMEEAKMTDGRYAAENLDHYLIPGIKDVPDMKLIAIEDLMKGDVYGPRGVGEIGTIAITPAIVKAVHDAVGCWINKLPISREELLEAIDRKGLKQWT.

Mo-molybdopterin contacts are provided by Gln-204, Phe-235, and Ala-508.

It belongs to the xanthine dehydrogenase family. As to quaternary structure, could be composed of four subunits: PucA, PucC, PucD and PucE. Requires Mo-molybdopterin as cofactor.

It carries out the reaction xanthine + NAD(+) + H2O = urate + NADH + H(+). The catalysed reaction is hypoxanthine + NAD(+) + H2O = xanthine + NADH + H(+). Its pathway is purine metabolism; hypoxanthine degradation; urate from hypoxanthine: step 1/2. It participates in purine metabolism; hypoxanthine degradation; urate from hypoxanthine: step 2/2. Oxidizes hypoxanthine and xanthine to uric acid. This Bacillus subtilis (strain 168) protein is Probable xanthine dehydrogenase subunit D (pucD).